Here is a 174-residue protein sequence, read N- to C-terminus: SUSHI domain-containing protein E3 (174 aa).

Residues 1 to 20 (MATEVQFACALVVLLGCGYA) form the signal peptide. A Sushi domain is found at 35–97 (QNCTTYPSIE…WTNGPPSCVK (63 aa)). Cystine bridges form between C37–C78 and C64–C95. The segment covering 108–127 (STSTTPVTTGTFPDPQNTTH) has biased composition (low complexity). Residues 108-133 (STSTTPVTTGTFPDPQNTTHPTHHTV) are disordered. A helical transmembrane segment spans residues 145 to 165 (FGYTPWAIITLVVIILLVVWI).

It is found in the host membrane. This Equine herpesvirus 2 (strain 86/87) (EHV-2) protein is SUSHI domain-containing protein E3 (E3).